The sequence spans 304 residues: Ornithine carbamoyltransferase (304 aa).

Carbamoyl phosphate contacts are provided by residues 47–50, R98, and 125–128; these read STRT and HPCQ. Residues N156, D221, and 225 to 226 contribute to the L-ornithine site; that span reads SM. Carbamoyl phosphate-binding positions include 262-263 and R290; that span reads CL.

The protein belongs to the aspartate/ornithine carbamoyltransferase superfamily. OTCase family.

Its subcellular location is the cytoplasm. The enzyme catalyses carbamoyl phosphate + L-ornithine = L-citrulline + phosphate + H(+). The protein operates within amino-acid biosynthesis; L-arginine biosynthesis; L-arginine from L-ornithine and carbamoyl phosphate: step 1/3. In terms of biological role, reversibly catalyzes the transfer of the carbamoyl group from carbamoyl phosphate (CP) to the N(epsilon) atom of ornithine (ORN) to produce L-citrulline. The protein is Ornithine carbamoyltransferase of Methanococcus maripaludis (strain C5 / ATCC BAA-1333).